We begin with the raw amino-acid sequence, 748 residues long: Peptidyl serine alpha-galactosyltransferase (748 aa).

A signal peptide spans 1-26; sequence MVAVFHGPLVLGALLLLLALQHGASA. At 27 to 710 the chain is on the extracellular side; sequence EEPGFANRTG…GPSLHSLLGR (684 aa). N-linked (GlcNAc...) asparagine glycosylation is found at Asn33, Asn184, and Asn297. The ShKT domain occupies 415–449; the sequence is CQDFHPKCEEWKESGECTKNENYMTENCRKTCDKC. Cystine bridges form between Cys415–Cys449, Cys422–Cys442, and Cys431–Cys446. 2 disordered regions span residues 474–576 and 611–670; these read ELQP…ADPK and EVPK…KKNI. The segment covering 531 to 565 has biased composition (pro residues); that stretch reads SPPPSPPPASPPPVDSPPPMSPPPESPSPDKPPPK. A compositionally biased stretch (basic and acidic residues) spans 611–637; sequence EVPKRTKATDEEEEAPKAKHAESHLTL. Residues 711-731 traverse the membrane as a helical segment; the sequence is LNTWQALVLWLVVVVAFLALV. Residues 732-748 are Cytoplasmic-facing; it reads PRIAKLRRRQRSGMRTE.

Mn(2+) is required as a cofactor.

It is found in the membrane. Glycosyltransferase involved in the O-galactosylation of several proteins including extensins. Catalyzes the transfer of alpha-galactosyl to Ser residues. Hydroxylation of proline residues adjacent to the serine acceptor is required for activity. Utilizes selectively UDP-galactose as a donor nucleotide sugar. In Chlamydomonas reinhardtii (Chlamydomonas smithii), this protein is Peptidyl serine alpha-galactosyltransferase.